We begin with the raw amino-acid sequence, 461 residues long: Vitamin K-dependent protein C (461 aa).

An N-terminal signal peptide occupies residues 1–18 (MWQLTSLLLFVATWGISG). Residue Thr-19 is glycosylated (O-linked (GalNAc...) threonine). Residues 19-42 (TPAPLDSVFSSSERAHQVLRIRKR) constitute a propeptide that is removed on maturation. A Gla domain is found at 43–88 (ANSFLEELRHSSLERECIEEICDFEEAKEIFQNVDDTLAFWSKHVD). 9 positions are modified to 4-carboxyglutamate: Glu-48, Glu-49, Glu-56, Glu-58, Glu-61, Glu-62, Glu-67, Glu-68, and Glu-71. Cys-59 and Cys-64 are oxidised to a cystine. 4 disulfide bridges follow: Cys-92/Cys-111, Cys-101/Cys-106, Cys-105/Cys-120, and Cys-122/Cys-131. EGF-like domains are found at residues 97–132 (LEHP…RFCQ) and 136–176 (SFLN…LQCH). A (3R)-3-hydroxyaspartate modification is found at Asp-113. N-linked (GlcNAc...) asparagine glycosylation is present at Asn-139. Cystine bridges form between Cys-140/Cys-151, Cys-147/Cys-160, Cys-162/Cys-175, Cys-183/Cys-319, and Cys-238/Cys-254. The region spanning 212-450 (LIDGKMTRRG…YLDWIHGHIR (239 aa)) is the Peptidase S1 domain. The Charge relay system role is filled by His-253. Asn-290 is a glycosylation site (N-linked (GlcNAc...) asparagine). Residue Asp-299 is the Charge relay system of the active site. A Phosphoserine; by FAM20C modification is found at Ser-347. N-linked (GlcNAc...) asparagine glycosylation occurs at Asn-355. N-linked (GlcNAc...) asparagine; atypical; partial glycosylation is present at Asn-371. 2 disulfides stabilise this stretch: Cys-373/Cys-387 and Cys-398/Cys-426. Ser-402 functions as the Charge relay system in the catalytic mechanism.

The protein belongs to the peptidase S1 family. As to quaternary structure, synthesized as a single chain precursor, which is cleaved into a light chain and a heavy chain held together by a disulfide bond. The enzyme is then activated by thrombin, which cleaves a tetradecapeptide from the amino end of the heavy chain; this reaction, which occurs at the surface of endothelial cells, is strongly promoted by thrombomodulin. Interacts (activated) with iripin-8, a serine protease inhibitor from Ixodes ricinus saliva. Post-translationally, the vitamin K-dependent, enzymatic carboxylation of some Glu residues allows the modified protein to bind calcium. In terms of processing, N- and O-glycosylated. Partial (70%) N-glycosylation of Asn-371 with an atypical N-X-C site produces a higher molecular weight form referred to as alpha. The lower molecular weight form, not N-glycosylated at Asn-371, is beta. O-glycosylated with core 1 or possibly core 8 glycans. The iron and 2-oxoglutarate dependent 3-hydroxylation of aspartate and asparagine is (R) stereospecific within EGF domains. Post-translationally, may be phosphorylated on a Ser or Thr in a region (AA 25-30) of the propeptide. Plasma; synthesized in the liver.

It localises to the secreted. The protein resides in the golgi apparatus. It is found in the endoplasmic reticulum. The enzyme catalyses Degradation of blood coagulation factors Va and VIIIa.. Its function is as follows. Protein C is a vitamin K-dependent serine protease that regulates blood coagulation by inactivating factors Va and VIIIa in the presence of calcium ions and phospholipids. Exerts a protective effect on the endothelial cell barrier function. The protein is Vitamin K-dependent protein C (PROC) of Homo sapiens (Human).